The primary structure comprises 118 residues: UPF0342 protein BPUM_0928 (118 aa).

It belongs to the UPF0342 family.

This chain is UPF0342 protein BPUM_0928, found in Bacillus pumilus (strain SAFR-032).